Consider the following 191-residue polypeptide: Holliday junction branch migration complex subunit RuvA (191 aa).

Residues 1-64 (MIGRLTGTLA…EDAQLLYGFL (64 aa)) form a domain I region. The domain II stretch occupies residues 65–138 (TATERATFRQ…KGKLGPDLAL (74 aa)). The flexible linker stretch occupies residues 138–142 (LPGAV). A domain III region spans residues 143 to 191 (IRNEAQSDIVQALIALGYNEREAAAAIKPLPADVGVSDGIKLALRALGK).

The protein belongs to the RuvA family. Homotetramer. Forms an RuvA(8)-RuvB(12)-Holliday junction (HJ) complex. HJ DNA is sandwiched between 2 RuvA tetramers; dsDNA enters through RuvA and exits via RuvB. An RuvB hexamer assembles on each DNA strand where it exits the tetramer. Each RuvB hexamer is contacted by two RuvA subunits (via domain III) on 2 adjacent RuvB subunits; this complex drives branch migration. In the full resolvosome a probable DNA-RuvA(4)-RuvB(12)-RuvC(2) complex forms which resolves the HJ.

It localises to the cytoplasm. Its function is as follows. The RuvA-RuvB-RuvC complex processes Holliday junction (HJ) DNA during genetic recombination and DNA repair, while the RuvA-RuvB complex plays an important role in the rescue of blocked DNA replication forks via replication fork reversal (RFR). RuvA specifically binds to HJ cruciform DNA, conferring on it an open structure. The RuvB hexamer acts as an ATP-dependent pump, pulling dsDNA into and through the RuvAB complex. HJ branch migration allows RuvC to scan DNA until it finds its consensus sequence, where it cleaves and resolves the cruciform DNA. In Leptothrix cholodnii (strain ATCC 51168 / LMG 8142 / SP-6) (Leptothrix discophora (strain SP-6)), this protein is Holliday junction branch migration complex subunit RuvA.